A 308-amino-acid polypeptide reads, in one-letter code: Zinc transporter ZIP9 (308 aa).

The helical transmembrane segment at 4–24 (FLSISLLSVAMLVGCYVAGII) threads the bilayer. The N-linked (GlcNAc...) asparagine glycan is linked to asparagine 29. A run of 5 helical transmembrane segments spans residues 35–55 (LKLV…AVIV), 107–127 (AYIG…DQIG), 147–167 (ITTT…LGAA), 177–197 (LIVF…LVSF), and 211–231 (HLLV…LGLS). N-linked (GlcNAc...) asparagine glycosylation occurs at asparagine 242. The next 2 helical transmembrane spans lie at 245-265 (GVAM…HVLP) and 287-307 (LEVA…IGHQ).

This sequence belongs to the ZIP transporter (TC 2.A.5) family.

It is found in the golgi apparatus. The protein resides in the trans-Golgi network membrane. Its subcellular location is the cell membrane. It localises to the cytoplasm. The protein localises to the perinuclear region. It is found in the mitochondrion. The protein resides in the nucleus. The catalysed reaction is Zn(2+)(in) = Zn(2+)(out). Its function is as follows. Transports zinc ions across cell and organelle membranes into the cytoplasm and regulates intracellular zinc homeostasis. Participates in the zinc ions efflux out of the secretory compartments. Regulates intracellular zinc level, resulting in the enhancement of AKT1 and MAPK3/MAPK1 (Erk1/2) phosphorylation in response to the BCR activation. Also functions as a membrane androgen receptor that mediates, through a G protein, the non-classical androgen signaling pathway, characterized by the activation of MAPK3/MAPK1 (Erk1/2) and transcription factors CREB1 or ATF1. This pathway contributes to CLDN1 and CLDN5 expression and tight junction formation between adjacent Sertoli cells. Mediates androgen-induced vascular endothelial cell proliferation through activation of an inhibitory G protein leading to the AKT1 and MAPK3/MAPK1 (Erk1/2) activation which in turn modulate inhibition (phosphorylation) of GSK3B and CCND1 transcription. Moreover, has dual functions as a membrane-bound androgen receptor and as an androgen-dependent zinc transporter both of which are mediated through an inhibitory G protein (Gi) that mediates both MAP kinase and zinc signaling leading to the androgen-dependent apoptotic process. This is Zinc transporter ZIP9 from Mus musculus (Mouse).